The following is an 81-amino-acid chain: Insulin-like growth factor 1 (81 aa).

A propeptide spanning residues 1 to 4 (FASA) is cleaved from the precursor. The interval 5–33 (GPETLCGAELVDALQFVCGDRGFYFNKPT) is b. 3 cysteine pairs are disulfide-bonded: cysteine 10–cysteine 52, cysteine 22–cysteine 65, and cysteine 51–cysteine 56. The interval 34–45 (GYGSSSRRAPQT) is c. The segment at 46-66 (GIVDECCFRSCDLRRLEMYCA) is a. A d region spans residues 67–74 (PLKPAKAA). The propeptide at 75 to 81 (RSVRAQR) is e peptide.

This sequence belongs to the insulin family. As to quaternary structure, forms a ternary complex with IGFR1 and ITGAV:ITGB3. Forms a ternary complex with IGFR1 and ITGA6:ITGB4.

The protein resides in the secreted. In terms of biological role, the insulin-like growth factors, isolated from plasma, are structurally and functionally related to insulin but have a much higher growth-promoting activity. May be a physiological regulator of [1-14C]-2-deoxy-D-glucose (2DG) transport and glycogen synthesis in osteoblasts. Stimulates glucose transport in bone-derived osteoblastic (PyMS) cells and is effective at much lower concentrations than insulin, not only regarding glycogen and DNA synthesis but also with regard to enhancing glucose uptake. May play a role in synapse maturation. Ca(2+)-dependent exocytosis of IGF1 is required for sensory perception of smell in the olfactory bulb. Acts as a ligand for IGF1R. Binds to the alpha subunit of IGF1R, leading to the activation of the intrinsic tyrosine kinase activity which autophosphorylates tyrosine residues in the beta subunit thus initiating a cascade of down-stream signaling events leading to activation of the PI3K-AKT/PKB and the Ras-MAPK pathways. Binds to integrins ITGAV:ITGB3 and ITGA6:ITGB4. Its binding to integrins and subsequent ternary complex formation with integrins and IGFR1 are essential for IGF1 signaling. Induces the phosphorylation and activation of IGFR1, MAPK3/ERK1, MAPK1/ERK2 and AKT1. As part of the MAPK/ERK signaling pathway, acts as a negative regulator of apoptosis in cardiomyocytes via promotion of STUB1/CHIP-mediated ubiquitination and degradation of ICER-type isoforms of CREM. In Suncus murinus (Asian house shrew), this protein is Insulin-like growth factor 1.